The primary structure comprises 644 residues: Chaperone protein DnaK (644 aa).

Threonine 199 carries the phosphothreonine; by autocatalysis modification. The segment at 605-644 is disordered; sequence KKSSEGQAAQGQTQSQESTKPVEEGVVDAEFEEVKEEDKK. The span at 609-623 shows a compositional bias: polar residues; the sequence is EGQAAQGQTQSQEST. The span at 629-644 shows a compositional bias: acidic residues; the sequence is GVVDAEFEEVKEEDKK.

It belongs to the heat shock protein 70 family.

Functionally, acts as a chaperone. The polypeptide is Chaperone protein DnaK (Legionella pneumophila (strain Paris)).